A 582-amino-acid polypeptide reads, in one-letter code: Hemagglutinin-neuraminidase (582 aa).

At 1-34 (MEPSKLFTMSDNATFAPGPVVNAADKKTFRTCFR) the chain is on the intravirion side. Residues 35 to 55 (ILVLSVQAVTLILVIVTLGEL) traverse the membrane as a helical segment. Topologically, residues 56–582 (VRMINDQGLS…LPVLTRLTIT (527 aa)) are virion surface. 3 disulfides stabilise this stretch: Cys178–Cys202, Cys192–Cys253, and Cys244–Cys257. Residues Asn284 and Asn329 are each glycosylated (N-linked (GlcNAc...) asparagine; by host). Cystine bridges form between Cys350/Cys471, Cys382/Cys392, and Cys465/Cys475. N-linked (GlcNAc...) asparagine; by host glycans are attached at residues Asn400 and Asn448. N-linked (GlcNAc...) asparagine; by host glycosylation is present at Asn507. Cysteines 545 and 556 form a disulfide.

Belongs to the paramyxoviruses hemagglutinin-neuraminidase family. As to quaternary structure, homotetramer; composed of disulfide-linked homodimers. Interacts with F protein trimer.

The protein localises to the virion membrane. Its subcellular location is the host cell membrane. It carries out the reaction Hydrolysis of alpha-(2-&gt;3)-, alpha-(2-&gt;6)-, alpha-(2-&gt;8)- glycosidic linkages of terminal sialic acid residues in oligosaccharides, glycoproteins, glycolipids, colominic acid and synthetic substrates.. In terms of biological role, attaches the virus to alpha-2,3-linked sialic acid-containing cell receptors and thereby initiating infection. Binding of HN protein to the receptor induces a conformational change that allows the F protein to trigger virion/cell membranes fusion. Binds to the glycan motifs sialyl Lewis (SLe) and GM2 ganglioside (GM2-glycan). Its function is as follows. Neuraminidase activity ensures the efficient spread of the virus by dissociating the mature virions from the neuraminic acid containing glycoproteins. This is Hemagglutinin-neuraminidase from Mumps orthorubulavirus (MuV).